Reading from the N-terminus, the 194-residue chain is Large ribosomal subunit protein eL15 (194 aa).

Residues 161–194 (GLTSAGKKGRGLMYKGKGAEKARPSVRANGKKTK) are disordered.

Belongs to the eukaryotic ribosomal protein eL15 family.

The chain is Large ribosomal subunit protein eL15 from Methanococcus maripaludis (strain C5 / ATCC BAA-1333).